The sequence spans 212 residues: Dephospho-CoA kinase (212 aa).

In terms of domain architecture, DPCK spans Arg6–Gln211. Gly14–Thr19 contributes to the ATP binding site.

Belongs to the CoaE family.

Its subcellular location is the cytoplasm. It carries out the reaction 3'-dephospho-CoA + ATP = ADP + CoA + H(+). It participates in cofactor biosynthesis; coenzyme A biosynthesis; CoA from (R)-pantothenate: step 5/5. In terms of biological role, catalyzes the phosphorylation of the 3'-hydroxyl group of dephosphocoenzyme A to form coenzyme A. The protein is Dephospho-CoA kinase of Albidiferax ferrireducens (strain ATCC BAA-621 / DSM 15236 / T118) (Rhodoferax ferrireducens).